Reading from the N-terminus, the 510-residue chain is NAD(P)H-quinone oxidoreductase subunit 2 A, chloroplastic (510 aa).

14 helical membrane-spanning segments follow: residues 31–51 (FIFP…IDLT), 59–79 (WFYF…LFRW), 99–119 (IFQF…VEYI), 124–144 (MAIT…MFLC), 149–169 (LITI…LSGY), 184–204 (LLMG…LYGL), 229–249 (ISIA…LAPF), 261–281 (PTPV…ALAT), 295–315 (WHLL…LLAI), 323–343 (MLAY…IVGD), 354–374 (YMLF…LFGL), 395–415 (ALSL…AGFF), 418–438 (LYLF…IGLL), and 484–504 (MTVC…ILAI).

The protein belongs to the complex I subunit 2 family. In terms of assembly, NDH is composed of at least 16 different subunits, 5 of which are encoded in the nucleus.

The protein resides in the plastid. It is found in the chloroplast thylakoid membrane. The catalysed reaction is a plastoquinone + NADH + (n+1) H(+)(in) = a plastoquinol + NAD(+) + n H(+)(out). It carries out the reaction a plastoquinone + NADPH + (n+1) H(+)(in) = a plastoquinol + NADP(+) + n H(+)(out). In terms of biological role, NDH shuttles electrons from NAD(P)H:plastoquinone, via FMN and iron-sulfur (Fe-S) centers, to quinones in the photosynthetic chain and possibly in a chloroplast respiratory chain. The immediate electron acceptor for the enzyme in this species is believed to be plastoquinone. Couples the redox reaction to proton translocation, and thus conserves the redox energy in a proton gradient. The polypeptide is NAD(P)H-quinone oxidoreductase subunit 2 A, chloroplastic (Saccharum hybrid (Sugarcane)).